The chain runs to 305 residues: Protein EXORDIUM-like 2 (305 aa).

Positions methionine 1–alanine 23 are cleaved as a signal peptide. Asparagine 44 carries N-linked (GlcNAc...) asparagine glycosylation.

It belongs to the EXORDIUM family.

Its subcellular location is the secreted. The protein localises to the extracellular space. It is found in the apoplast. Its function is as follows. May play a role in a brassinosteroid-dependent regulation of growth and development. This is Protein EXORDIUM-like 2 (EXL2) from Arabidopsis thaliana (Mouse-ear cress).